Here is a 1055-residue protein sequence, read N- to C-terminus: RapA guanosine triphosphatase-activating protein 1 (1055 aa).

6 disordered regions span residues L76–R100, N256–T292, Q418–V525, T544–L570, T603–E629, and N943–T969. Residues Q89–R100 show a composition bias toward basic and acidic residues. Composition is skewed to low complexity over residues S262–T292, D442–N455, and T469–N482. Residues I483–P494 are compositionally biased toward polar residues. Composition is skewed to low complexity over residues T603 to P622 and N943 to N966. The 270-residue stretch at L779–F1048 folds into the Rap-GAP domain.

It localises to the cytoplasm. Its subcellular location is the cell cortex. In terms of biological role, mediates the deactivation of rap1 and plays an important role in spatially and temporally regulating cell adhesion and chemotaxis by controlling attachment disassembly in the leading edge through the regulation of myosin II assembly and disassembly. Overexpression leads to defective chemotaxis. This is RapA guanosine triphosphatase-activating protein 1 (rapgap1) from Dictyostelium discoideum (Social amoeba).